Consider the following 406-residue polypeptide: MEGKMANVYDVLKERGYLKQLTHEEEIREILGKEKVTFYIGFDPTADSLHVGHFIAMMFMAHMQQHGHRPIALAGGGTGMIGDPSGRSDMRTMMTVEMIDHNVECIKKQMQKFIDFSEDKAILANNADWLRNLNYIEFLRDVGEHFSVNRMLAAECYKSRMENGLSFLEFNYMIMQAYDFYILNHKYNCTMQLGGDDQWSNMIAGVELLRRKDRKPAYAMTCTLLTNSEGKKMGKTAKGALWLDPEKTTPYEFYQYWRNIDDQDVEKCLALLTFLPMDEVRRLGALKDAEINEAKKVLAYEVTKIIHGEEEATKAKEATEALFGSGNNLDNAPKIEVTDEDFSKELLDVLVDRKIIKTKSEGRRLIEQNGMSLNDEKIKDVKFTLNDNTLGLLKLGKKKFYNIVKK.

Tyr-39 contacts L-tyrosine. The short motif at 44–53 (PTADSLHVGH) is the 'HIGH' region element. The L-tyrosine site is built by Tyr-172 and Gln-176. A 'KMSKS' region motif is present at residues 232-236 (KMGKT). Residue Lys-235 coordinates ATP. The 61-residue stretch at 344 to 404 (KELLDVLVDR…LGKKKFYNIV (61 aa)) folds into the S4 RNA-binding domain.

This sequence belongs to the class-I aminoacyl-tRNA synthetase family. TyrS type 1 subfamily. Homodimer.

Its subcellular location is the cytoplasm. It catalyses the reaction tRNA(Tyr) + L-tyrosine + ATP = L-tyrosyl-tRNA(Tyr) + AMP + diphosphate + H(+). Catalyzes the attachment of tyrosine to tRNA(Tyr) in a two-step reaction: tyrosine is first activated by ATP to form Tyr-AMP and then transferred to the acceptor end of tRNA(Tyr). The protein is Tyrosine--tRNA ligase of Fusobacterium nucleatum subsp. nucleatum (strain ATCC 25586 / DSM 15643 / BCRC 10681 / CIP 101130 / JCM 8532 / KCTC 2640 / LMG 13131 / VPI 4355).